A 202-amino-acid chain; its full sequence is NAD(P)H dehydrogenase (quinone) 2 (202 aa).

The 187-residue stretch at 4-190 (VLVLYYSSYG…AGAFHQGEIV (187 aa)) folds into the Flavodoxin-like domain. Residues 10–15 (SSYGHI) and 78–80 (TRF) contribute to the FMN site. Tyr12 serves as a coordination point for NAD(+). Trp98 serves as a coordination point for substrate. FMN contacts are provided by residues 113–119 (STGTQHG) and His134.

It belongs to the WrbA family. FMN serves as cofactor.

It carries out the reaction a quinone + NADH + H(+) = a quinol + NAD(+). It catalyses the reaction a quinone + NADPH + H(+) = a quinol + NADP(+). This chain is NAD(P)H dehydrogenase (quinone) 2, found in Rhizobium meliloti (strain 1021) (Ensifer meliloti).